Here is a 1549-residue protein sequence, read N- to C-terminus: Structural maintenance of chromosomes protein 4 (1549 aa).

The tract at residues 1 to 78 (MPPKTSAAPP…LFSLQLPSRP (78 aa)) is disordered. Basic residues predominate over residues 26–36 (KPQKKTTKPVN). Residues 37-59 (RHKEGSKDPEEELQRAVNEKFDG) show a composition bias toward basic and acidic residues. Residue 121–128 (GPNGSGKS) participates in ATP binding. The stretch at 326 to 604 (MKLEQRRRQR…QNSSCSSSNK (279 aa)) forms a coiled coil. Composition is skewed to basic and acidic residues over residues 396–407 (LSDLGTEETRRK) and 420–444 (AEAEKEKEVKKRSNLEAAPEKAERK). Disordered regions lie at residues 396–444 (LSDL…AERK) and 460–485 (KTANEEADKNLDEFEKRSEAPKEEQK). Positions 619–734 (KSFHGRLGDL…GDSTQEAQRM (116 aa)) constitute an SMC hinge domain. 2 coiled-coil regions span residues 786-1058 (KAAE…KVNR) and 1144-1182 (EKINEISSRDAEEMQMKLKVCEQQVEALKAKVDISSIKA). Residues 1440 to 1459 (IQTTRDVTSRPQSKATTSGD) show a composition bias toward polar residues. Residues 1440–1549 (IQTTRDVTSR…AIVDDDDDME (110 aa)) are disordered. Basic and acidic residues predominate over residues 1460–1474 (GTERPASRSASRPES). Residues 1510-1523 (TPPSKRSNSASTPK) are compositionally biased toward polar residues.

Belongs to the SMC family. SMC4 subfamily. As to quaternary structure, component of the condensin I complex, which contains the mix-1/SMC2 and smc-4/SMC4 heterodimer, and three non SMC subunits that probably regulate the complex: dpy-26, capg-1 and dpy-28. Within the complex, interacts with mix-1, dpy-26, capg-1 and dpy-28. Component of the condensin II complex, which contains the mix-1/SMC2 and smc-4/SMC4 heterodimer, and three non SMC subunits, kle-2, capg-2 and hcp-6 that probably regulate the complex. Within the complex, interacts with mix-1, kle-2, capg-2 and hcp-6. Interacts with smcl-1.

The protein localises to the nucleus. The protein resides in the chromosome. Functionally, central component of the condensin I complex, a complex required for conversion of interphase chromatin into mitotic-like condense chromosomes. The condensin I complex introduces positive supercoils into relaxed DNA in the presence of type I topoisomerases. Converts nicked DNA into positive knotted forms in the presence of type II topoisomerases. Also a central component of the condensin II complex, a complex that seems to play a role in prophase chromosome condensation. Both the condensin complex I and II play a role in meiotic and mitotic chromosome segregation. Plays a role in robust cytokinesis upon the presence of chromatin obstructions. The chain is Structural maintenance of chromosomes protein 4 (smc-4) from Caenorhabditis elegans.